The chain runs to 430 residues: Adenylosuccinate synthetase (430 aa).

Residues 12–18 (GDEGKGK) and 40–42 (GHT) each bind GTP. Catalysis depends on Asp-13, which acts as the Proton acceptor. Residues Asp-13 and Gly-40 each coordinate Mg(2+). IMP is bound by residues 13 to 16 (DEGK), 38 to 41 (NAGH), Thr-128, Arg-142, Gln-223, Thr-238, and Arg-302. His-41 (proton donor) is an active-site residue. 298–304 (TTTGRPR) contacts substrate. GTP contacts are provided by residues Arg-304, 330–332 (SID), and 412–414 (SVG).

It belongs to the adenylosuccinate synthetase family. Homodimer. Requires Mg(2+) as cofactor.

The protein localises to the cytoplasm. It carries out the reaction IMP + L-aspartate + GTP = N(6)-(1,2-dicarboxyethyl)-AMP + GDP + phosphate + 2 H(+). The protein operates within purine metabolism; AMP biosynthesis via de novo pathway; AMP from IMP: step 1/2. Plays an important role in the de novo pathway of purine nucleotide biosynthesis. Catalyzes the first committed step in the biosynthesis of AMP from IMP. The sequence is that of Adenylosuccinate synthetase from Streptococcus pyogenes serotype M5 (strain Manfredo).